We begin with the raw amino-acid sequence, 250 residues long: AA9 family lytic polysaccharide monooxygenase AA17 (250 aa).

A signal peptide spans 1-21 (MAMSKIVSLTGLLASASLVAG). The Cu(2+) site is built by His22 and His107. 2 disulfide bridges follow: Cys77–Cys199 and Cys118–Cys122. N-linked (GlcNAc...) asparagine glycosylation is present at Asn159. Positions 185 and 194 each coordinate O2. Tyr196 contacts Cu(2+).

It belongs to the polysaccharide monooxygenase AA9 family. Cu(2+) serves as cofactor.

It is found in the secreted. Its function is as follows. Lytic polysaccharide monooxygenase (LPMO) that exhibits oxidative cleavage beta-O-4 linkage of lignin resulting in the formation of aromatic compound guaiacol. Catalysis by LPMOs requires the reduction of the active-site copper from Cu(II) to Cu(I) by a reducing agent and H(2)O(2) or O(2) as a cosubstrate. Does not use cellulose, cello-oligosaccharides, xyloglucan, xylan, chitin nor starch as substrates. Able to depolymerize the lignin dimer guaicyl glycerol beta-guaicyl ether (GGE). The sequence is that of AA9 family lytic polysaccharide monooxygenase AA17 from Aspergillus oryzae (strain ATCC 42149 / RIB 40) (Yellow koji mold).